Reading from the N-terminus, the 176-residue chain is MADFTLILAEGVVEPTAFGLDATVWVSIAMLVFLGILVWKGVPGAIAAMLDKRIAEISKQLGEAEQLRLDAESLKAEYEAKLADAAKEADEMRARADAEAQALVAKAKADATALIARRKQMAEDRIAAAEANALAEVRAAAVKAATEAAAKLIADRHDVAADKALVDQAIASIAKG.

Residues 18–38 traverse the membrane as a helical segment; sequence FGLDATVWVSIAMLVFLGILV.

Belongs to the ATPase B chain family. F-type ATPases have 2 components, F(1) - the catalytic core - and F(0) - the membrane proton channel. F(1) has five subunits: alpha(3), beta(3), gamma(1), delta(1), epsilon(1). F(0) has three main subunits: a(1), b(2) and c(10-14). The alpha and beta chains form an alternating ring which encloses part of the gamma chain. F(1) is attached to F(0) by a central stalk formed by the gamma and epsilon chains, while a peripheral stalk is formed by the delta and b chains.

The protein localises to the cell inner membrane. F(1)F(0) ATP synthase produces ATP from ADP in the presence of a proton or sodium gradient. F-type ATPases consist of two structural domains, F(1) containing the extramembraneous catalytic core and F(0) containing the membrane proton channel, linked together by a central stalk and a peripheral stalk. During catalysis, ATP synthesis in the catalytic domain of F(1) is coupled via a rotary mechanism of the central stalk subunits to proton translocation. Functionally, component of the F(0) channel, it forms part of the peripheral stalk, linking F(1) to F(0). The chain is ATP synthase subunit b from Sphingopyxis alaskensis (strain DSM 13593 / LMG 18877 / RB2256) (Sphingomonas alaskensis).